A 206-amino-acid chain; its full sequence is Cytochrome c biogenesis ATP-binding export protein CcmA (206 aa).

The 205-residue stretch at 2-206 (LEARDVVCIR…IQLTPSEGTP (205 aa)) folds into the ABC transporter domain. 34-41 (GANGVGKT) contributes to the ATP binding site.

It belongs to the ABC transporter superfamily. CcmA exporter (TC 3.A.1.107) family. The complex is composed of two ATP-binding proteins (CcmA) and two transmembrane proteins (CcmB).

The protein localises to the cell inner membrane. It carries out the reaction heme b(in) + ATP + H2O = heme b(out) + ADP + phosphate + H(+). Its function is as follows. Part of the ABC transporter complex CcmAB involved in the biogenesis of c-type cytochromes; once thought to export heme, this seems not to be the case, but its exact role is uncertain. Responsible for energy coupling to the transport system. The sequence is that of Cytochrome c biogenesis ATP-binding export protein CcmA from Pectobacterium atrosepticum (strain SCRI 1043 / ATCC BAA-672) (Erwinia carotovora subsp. atroseptica).